The chain runs to 239 residues: Ribitol-5-phosphate cytidylyltransferase (239 aa).

CTP-binding positions include 7-10 (FAGG) and 80-86 (GETGQMS).

It belongs to the IspD/TarI cytidylyltransferase family. TarI subfamily.

The catalysed reaction is D-ribitol 5-phosphate + CTP + H(+) = CDP-L-ribitol + diphosphate. Its pathway is cell wall biogenesis; poly(ribitol phosphate) teichoic acid biosynthesis. Its function is as follows. Catalyzes the transfer of the cytidylyl group of CTP to D-ribitol 5-phosphate. The sequence is that of Ribitol-5-phosphate cytidylyltransferase from Streptococcus agalactiae serotype Ia (strain ATCC 27591 / A909 / CDC SS700).